The sequence spans 429 residues: 4-hydroxyphenylacetate degradation bifunctional isomerase/decarboxylase (429 aa).

Approximate repeat units follow at residues 1 to 215 (MKGT…NQTF) and 216 to 429 (TWPL…ESAN). E276, E278, and D307 together coordinate a divalent metal cation.

This sequence belongs to the FAH family. In terms of assembly, monomer. Requires Mg(2+) as cofactor.

The catalysed reaction is (2E,4Z)-5-hydroxypenta-2,4-diene-1,2,5-tricarboxylate = (3E,5R)-5-carboxy-2-oxohept-3-enedioate. It carries out the reaction (3E,5R)-5-carboxy-2-oxohept-3-enedioate + H(+) = (4Z)-2-oxohept-4-enedioate + CO2. It functions in the pathway aromatic compound metabolism; 4-hydroxyphenylacetate degradation; pyruvate and succinate semialdehyde from 4-hydroxyphenylacetate: step 4/7. It participates in aromatic compound metabolism; 4-hydroxyphenylacetate degradation; pyruvate and succinate semialdehyde from 4-hydroxyphenylacetate: step 5/7. Its function is as follows. Decarboxylates OPET (5-oxo-pent-3-ene-1,2,5-tricarboxylic acid) into HHDD (2-hydroxy-hept-2,4-diene-1,7-dioate) and isomerizes it to OHED (2-oxo-hept-3-ene-1,7-dioate). The polypeptide is 4-hydroxyphenylacetate degradation bifunctional isomerase/decarboxylase (hpaG) (Salmonella dublin).